The following is a 166-amino-acid chain: Cold-inducible RNA-binding protein B (166 aa).

One can recognise an RRM domain in the interval 5-83 (GKLFIGGLNF…RQIRVDQAGK (79 aa)). The tract at residues 68–166 (GKAVDGRQIR…DSYDSYATHE (99 aa)) is disordered. Residues 92-115 (YRGGSSGGRGFFRGGRGRGGGDRG) show a composition bias toward gly residues. Over residues 133-149 (GSRDYYSSGRSQGSYGD) the composition is skewed to low complexity. Basic and acidic residues predominate over residues 157–166 (DSYDSYATHE).

Interacts with prmt1. Interacts with elavl1/elrA (via RRM3). Associates with ribosomes. Post-translationally, methylated on arginine residues within RGG motifs. Methylation by prmt1 promotes cytoplasmic accumulation. In adults, most abundant in testis, ovary, brain and liver, with lower expression in kidney and heart.

The protein resides in the nucleus. The protein localises to the nucleoplasm. Its subcellular location is the cytoplasm. Functionally, cold-inducible mRNA binding protein. Acts cooperatively with elavl1/elrA to stabilize AU-rich element (ARE)-containing mRNAs by binding to them and inhibiting their deadenylation. Essential for embryonic gastrulation and neural development, acting to maintain the expression of a set of adhesion molecules, and cell movement during embryogenesis. Required for pronephros development. This chain is Cold-inducible RNA-binding protein B (cirbp-b), found in Xenopus laevis (African clawed frog).